The primary structure comprises 325 residues: MQYKKPLVVSALAATSLAAYAPKDPWSTLTPSATYKGGITDYSSSFGIAIEAVATSASSVASSKAKRAASQIGDGQVQAATTTAAVSKKSTAAAVSQITDGQVQAAKSTAAAVSQITDGQVQAAKSTAAAVSQITDGQVQAAKSTAAAVSQITDGQVQAAKSTAAAASQISDGQVQATTSTKAAASQITDGQIQASKTTSGASQVSDGQVQATAEVKDANDPVDVVSCNNNSTLSMSLSKGILTDRKGRIGSIVANRQFQFDGPPPQAGAIYAAGWSITPEGNLALGDQDTFYQCLSGDFYNLYDKHIGSQCHEVYLQAIDLIDC.

An N-terminal signal peptide occupies residues 1-18; that stretch reads MQYKKPLVVSALAATSLA. A propeptide spanning residues 19-67 is cleaved from the precursor; it reads AYAPKDPWSTLTPSATYKGGITDYSSSFGIAIEAVATSASSVASSKAKR. PIR1/2/3 repeat units lie at residues 68-91, 92-109, 110-127, 128-145, 146-163, 164-181, 182-199, and 200-217; these read AASQIGDGQVQAATTTAAVSKKST, AAAVSQITDGQVQAAKST, AAAASQISDGQVQATTST, KAAASQITDGQIQASKTT, and SGASQVSDGQVQATAEVK.

Belongs to the PIR protein family. Post-translationally, covalently linked to beta-1,3-glucan of the inner cell wall layer via an alkali-sensitive ester linkage between the gamma-carboxyl group of glutamic acids, arising from specific glutamines within the PIR1/2/3 repeats, and hydroxyl groups of glucoses of beta-1,3-glucan chains. O-glycosylated. Extensively O-mannosylated.

The protein resides in the secreted. Its subcellular location is the cell wall. Its function is as follows. Component of the outer cell wall layer. Required for stability of the cell wall and for optimal growth. Required for resistance against several antifungal and cell wall-perturbing agents. The chain is Cell wall mannoprotein PIR3 (PIR3) from Saccharomyces cerevisiae (strain ATCC 204508 / S288c) (Baker's yeast).